Here is a 388-residue protein sequence, read N- to C-terminus: Putative C-&gt;U-editing enzyme APOBEC-4 (388 aa).

Positions 60–176 constitute a CMP/dCMP-type deaminase domain; it reads PQTKHLTFYE…AWNREALRGL (117 aa). Zn(2+) is bound at residue His-92. Glu-94 functions as the Proton donor in the catalytic mechanism. 2 residues coordinate Zn(2+): Cys-126 and Cys-133. The tract at residues 322–356 is disordered; the sequence is KVKALRKSPSGRPVKKEEARKGSTRSQEANETNKS.

It belongs to the cytidine and deoxycytidylate deaminase family. Zn(2+) serves as cofactor.

In terms of biological role, putative C to U editing enzyme whose physiological substrate is not yet known. The polypeptide is Putative C-&gt;U-editing enzyme APOBEC-4 (Apobec4) (Rattus norvegicus (Rat)).